A 284-amino-acid polypeptide reads, in one-letter code: Bifunctional protein FolD (284 aa).

Residues 164 to 166 (GTS) and I230 each bind NADP(+).

This sequence belongs to the tetrahydrofolate dehydrogenase/cyclohydrolase family. As to quaternary structure, homodimer.

It carries out the reaction (6R)-5,10-methylene-5,6,7,8-tetrahydrofolate + NADP(+) = (6R)-5,10-methenyltetrahydrofolate + NADPH. It catalyses the reaction (6R)-5,10-methenyltetrahydrofolate + H2O = (6R)-10-formyltetrahydrofolate + H(+). It participates in one-carbon metabolism; tetrahydrofolate interconversion. Catalyzes the oxidation of 5,10-methylenetetrahydrofolate to 5,10-methenyltetrahydrofolate and then the hydrolysis of 5,10-methenyltetrahydrofolate to 10-formyltetrahydrofolate. In Mycoplasma capricolum subsp. capricolum (strain California kid / ATCC 27343 / NCTC 10154), this protein is Bifunctional protein FolD.